The following is a 345-amino-acid chain: UDP-N-acetylenolpyruvoylglucosamine reductase (345 aa).

Positions 16–185 (VNAFAKSVVT…VSVGLRLCKK (170 aa)) constitute an FAD-binding PCMH-type domain. The active site involves Arg162. The active-site Proton donor is the Ser231. Glu328 is an active-site residue.

The protein belongs to the MurB family. FAD serves as cofactor.

It is found in the cytoplasm. The enzyme catalyses UDP-N-acetyl-alpha-D-muramate + NADP(+) = UDP-N-acetyl-3-O-(1-carboxyvinyl)-alpha-D-glucosamine + NADPH + H(+). The protein operates within cell wall biogenesis; peptidoglycan biosynthesis. Cell wall formation. This Blochmanniella pennsylvanica (strain BPEN) protein is UDP-N-acetylenolpyruvoylglucosamine reductase.